The sequence spans 346 residues: Eukaryotic translation initiation factor 3 subunit I (346 aa).

5 WD repeats span residues 8–47 (GHER…RLGT), 50–89 (GHNG…IAHS), 150–189 (EGCA…CLEI), 192–233 (LHKQ…KTYE), and 289–328 (DHFG…FDFK).

Belongs to the eIF-3 subunit I family. As to quaternary structure, component of the eukaryotic translation initiation factor 3 (eIF-3) complex.

Its subcellular location is the cytoplasm. Its function is as follows. Component of the eukaryotic translation initiation factor 3 (eIF-3) complex, which is involved in protein synthesis of a specialized repertoire of mRNAs and, together with other initiation factors, stimulates binding of mRNA and methionyl-tRNAi to the 40S ribosome. The eIF-3 complex specifically targets and initiates translation of a subset of mRNAs involved in cell proliferation. The sequence is that of Eukaryotic translation initiation factor 3 subunit I from Eremothecium gossypii (strain ATCC 10895 / CBS 109.51 / FGSC 9923 / NRRL Y-1056) (Yeast).